A 171-amino-acid polypeptide reads, in one-letter code: Peptidyl-prolyl cis-trans isomerase (171 aa).

One can recognise a PPIase cyclophilin-type domain in the interval 7–170 (FFDLTIGGAP…KPVVIADCGQ (164 aa)).

Belongs to the cyclophilin-type PPIase family. In terms of tissue distribution, expressed in leaves, floral buds, growing shoots and stamens at anthesis.

The protein localises to the cytoplasm. It catalyses the reaction [protein]-peptidylproline (omega=180) = [protein]-peptidylproline (omega=0). With respect to regulation, binds cyclosporin A (CsA). CsA mediates some of its effects via an inhibitory action on PPIase. PPIases accelerate the folding of proteins. It catalyzes the cis-trans isomerization of proline imidic peptide bonds in oligopeptides. The chain is Peptidyl-prolyl cis-trans isomerase from Solanum lycopersicum (Tomato).